Here is a 191-residue protein sequence, read N- to C-terminus: Thymidylate kinase (191 aa).

ATP is bound at residue 7–14 (GIDTCGKS).

It belongs to the thymidylate kinase family.

It carries out the reaction dTMP + ATP = dTDP + ADP. Its function is as follows. Phosphorylation of dTMP to form dTDP in both de novo and salvage pathways of dTTP synthesis. The chain is Thymidylate kinase from Sulfurovum sp. (strain NBC37-1).